The chain runs to 268 residues: Energy-coupling factor transporter transmembrane protein EcfT (268 aa).

Helical transmembrane passes span 26–46, 47–67, 73–93, 116–136, 151–171, and 246–266; these read ILAV…LSYG, ILIG…GLLL, LWII…GEAL, LVLL…IVLT, VPAH…PTLL, and ALTG…RWGI.

Belongs to the energy-coupling factor EcfT family. Forms a stable energy-coupling factor (ECF) transporter complex composed of 2 membrane-embedded substrate-binding proteins (S component), 2 ATP-binding proteins (A component) and 2 transmembrane proteins (T component). May be able to interact with more than 1 S component at a time.

Its subcellular location is the cell membrane. Functionally, transmembrane (T) component of an energy-coupling factor (ECF) ABC-transporter complex. Unlike classic ABC transporters this ECF transporter provides the energy necessary to transport a number of different substrates. The chain is Energy-coupling factor transporter transmembrane protein EcfT from Acidaminococcus fermentans (strain ATCC 25085 / DSM 20731 / CCUG 9996 / CIP 106432 / VR4).